The sequence spans 919 residues: UPF0182 protein SUN_1015 (919 aa).

7 consecutive transmembrane segments (helical) span residues 8-28 (IIITALAIFTIYLFSLFVDYY), 51-71 (ILSFILFFLIFILFSGIHIHF), 102-122 (AVAWLWAVIILFFAIVMGSYA), 158-178 (VYQFVVSWYLFMVVITFIGVL), 207-227 (LTAFFALGVSALYFIKLYNIL), 246-266 (IPAYWTILVMSLIITILLFFY), and 274-294 (VIVSALGLWVLVWAGFVWIYP).

It belongs to the UPF0182 family.

It localises to the cell membrane. The sequence is that of UPF0182 protein SUN_1015 from Sulfurovum sp. (strain NBC37-1).